The chain runs to 173 residues: MARVEL domain-containing protein 1 (173 aa).

At M1 the chain carries N-acetylmethionine. Residues 1–29 (MLPPPPRQPPPQARAARGAVRLQRPFLRS) lie on the Cytoplasmic side of the membrane. The 141-residue stretch at 26–166 (FLRSPLGVLR…SALYGCGRRC (141 aa)) folds into the MARVEL domain. The helical transmembrane segment at 30-50 (PLGVLRLLQLLAGAAFWITIA) threads the bilayer. Residues 51–59 (TSKYQGPVH) lie on the Extracellular side of the membrane. Residues 60–80 (FALFVSVLFWLLTLGLYFLTL) traverse the membrane as a helical segment. At 81 to 94 (LGKHELVPVLGSRW) the chain is on the cytoplasmic side. Residues 95 to 115 (LMVNVAHDVLAAALYGAATGI) traverse the membrane as a helical segment. The Extracellular portion of the chain corresponds to 116-138 (MSDQMQRHSYCNLKDYPLPCAYH). A helical membrane pass occupies residues 139 to 159 (AFLAAAVCGGVCHGLYLLSAL). Residues 160–173 (YGCGRRCQGKQEVA) are Cytoplasmic-facing.

In terms of tissue distribution, widely expressed in normal tissues. Down-regulated in multiple primary tumors.

Its subcellular location is the cell membrane. It localises to the cytoplasm. The protein resides in the cytoskeleton. It is found in the nucleus. Microtubule-associated protein that exhibits cell cycle-dependent localization and can inhibit cell proliferation and migration. The polypeptide is MARVEL domain-containing protein 1 (MARVELD1) (Homo sapiens (Human)).